The chain runs to 520 residues: Succinyl-CoA:3-ketoacid coenzyme A transferase 2A, mitochondrial (520 aa).

The N-terminal 39 residues, 1-39 (MAALRLLAWAFSRRVSAHRPQPTLPHHLIRHYPTTRCGK), are a transit peptide targeting the mitochondrion. The tract at residues 280-299 (ERLTTRDSPPAPGSKDQDPK) is disordered. Residue Glu342 is the 5-glutamyl coenzyme A thioester intermediate of the active site.

This sequence belongs to the 3-oxoacid CoA-transferase family. Homodimer. As to expression, expressed in flagella of epididymal sperm.

Its subcellular location is the mitochondrion. The enzyme catalyses a 3-oxo acid + succinyl-CoA = a 3-oxoacyl-CoA + succinate. It participates in ketone metabolism; succinyl-CoA degradation; acetoacetyl-CoA from succinyl-CoA: step 1/1. Its function is as follows. Key enzyme for ketone body catabolism. Transfers the CoA moiety from succinate to acetoacetate. Formation of the enzyme-CoA intermediate proceeds via an unstable anhydride species formed between the carboxylate groups of the enzyme and substrate. Probably play and important roles in the energy metabolism of spermatozoa. This is Succinyl-CoA:3-ketoacid coenzyme A transferase 2A, mitochondrial (Oxct2a) from Rattus norvegicus (Rat).